Reading from the N-terminus, the 309-residue chain is Homoserine kinase (309 aa).

91–101 (PIGSGLGSSAC) lines the ATP pocket.

The protein belongs to the GHMP kinase family. Homoserine kinase subfamily.

The protein localises to the cytoplasm. The enzyme catalyses L-homoserine + ATP = O-phospho-L-homoserine + ADP + H(+). It functions in the pathway amino-acid biosynthesis; L-threonine biosynthesis; L-threonine from L-aspartate: step 4/5. Its function is as follows. Catalyzes the ATP-dependent phosphorylation of L-homoserine to L-homoserine phosphate. In Buchnera aphidicola subsp. Acyrthosiphon pisum (strain 5A), this protein is Homoserine kinase.